We begin with the raw amino-acid sequence, 517 residues long: Nectin-1 (517 aa).

The N-terminal stretch at 1–30 (MARMGLAGAAGRWWGLALGLTAFFLPGVHS) is a signal peptide. The region spanning 31–141 (QVVQVNDSMY…GNRESQLNLT (111 aa)) is the Ig-like V-type domain. Topologically, residues 31–355 (QVVQVNDSMY…GRRAGPVPTA (325 aa)) are extracellular. 3 N-linked (GlcNAc...) asparagine glycosylation sites follow: Asn36, Asn72, and Asn139. Cys51 and Cys124 form a disulfide bridge. Ig-like C2-type domains are found at residues 149 to 238 (WIEG…FKES) and 247 to 334 (PEVT…VNIT). Intrachain disulfides connect Cys172–Cys226 and Cys269–Cys316. Asn202 is a glycosylation site (N-linked (GlcNAc...) (complex) asparagine). Residues 282–299 (WTTLNGSLPKGVEAQNRT) form an interaction with FGFR region. N-linked (GlcNAc...) asparagine glycosylation is found at Asn286, Asn297, Asn307, and Asn332. A helical membrane pass occupies residues 356–376 (IIGGVAGSILLVLIVVGGIVV). Residues 377-517 (ALRRRRHTFK…SFISKKEWYV (141 aa)) are Cytoplasmic-facing. Positions 399-488 (GYSKAGIPQH…DGYGDRTLGY (90 aa)) are disordered. A phosphoserine mark is found at Ser422, Ser434, and Ser435. A Phosphotyrosine modification is found at Tyr436. Residues 436–445 (YEEEEEEEEG) show a composition bias toward acidic residues. The segment covering 449–466 (GERKVGGPHPKYDEDAKR) has biased composition (basic and acidic residues). Ser511 is modified (phosphoserine).

It belongs to the nectin family. In terms of assembly, cis- and trans-homodimer. Can form trans-heterodimers with NECTIN3 and with NECTIN4. Interaction between NECTIN1 and NECTIN3 on the pre- and postsynaptic sites, respectively, initiates the formation of puncta adherentia junctions between axons and dendrites. Interacts (via cytoplasmic domain) with AFDN (via PDZ domain); this interaction recruits NECTIN1 to cadherin-based adherens junctions and provides a connection with the actin cytoskeleton. Interacts with integrin alphaV/beta3. Interacts (via Ig-like C2-type domain 2) with FGFR1, FGFR2 and FGFR3. As to quaternary structure, (Microbial infection) Interacts with herpes simplex virus 1/HHV-1, herpes simplex virus 2/HHV-2, and pseudorabies virus/PRV envelope glycoprotein D. Post-translationally, (Microbial infection) Ubiquitinated by CBL following infection by herpes simplex virus 1/HHV-1 and association with HHV-1 envelope glycoprotein D, leading to its removal from cell surface.

It localises to the cell membrane. It is found in the cell junction. The protein resides in the adherens junction. The protein localises to the presynaptic cell membrane. Its subcellular location is the secreted. In terms of biological role, cell adhesion molecule that promotes cell-cell contacts and plays important roles in the development of the nervous system. Acts by forming homophilic or heterophilic trans-dimers. Heterophilic interactions have been detected between NECTIN1 and NECTIN3 and between NECTIN1 and NECTIN4. Involved in axon guidance by promoting contacts between the commissural axons and the floor plate cells. Involved in synaptogegesis. Has some neurite outgrowth-promoting activity. Promotes formation of checkerboard-like cellular pattern of hair cells and supporting cells in the auditory epithelium via heterophilic interaction with NECTIN3: NECTIN1 is present in the membrane of hair cells and associates with NECTIN3 on supporting cells, thereby mediating heterotypic adhesion between these two cell types. Required for enamel mineralization. (Microbial infection) Acts as a receptor for herpes simplex virus 1/HHV-1, herpes simplex virus 2/HHV-2, and pseudorabies virus/PRV. Constitutes the major receptor for herpes simplex virus 1/HHV-1 entry into host cells. This Homo sapiens (Human) protein is Nectin-1.